A 545-amino-acid chain; its full sequence is CTP synthase (545 aa).

An amidoligase domain region spans residues 2–266 (TTNYIFVTGG…DDYICKRFSL (265 aa)). Position 14 (Ser14) interacts with CTP. Ser14 lines the UTP pocket. Residues 15-20 (SLGKGI) and Asp72 each bind ATP. Residues Asp72 and Glu140 each coordinate Mg(2+). Residues 147 to 149 (DIE), 187 to 192 (KTKPTQ), and Lys223 contribute to the CTP site. UTP is bound by residues 187–192 (KTKPTQ) and Lys223. 239–241 (KDV) lines the ATP pocket. The 252-residue stretch at 291 to 542 (TIGMVGKYIE…VKAANEHQKR (252 aa)) folds into the Glutamine amidotransferase type-1 domain. Gly352 provides a ligand contact to L-glutamine. Residue Cys379 is the Nucleophile; for glutamine hydrolysis of the active site. Residues 380-383 (LGMQ), Glu403, and Arg470 each bind L-glutamine. Active-site residues include His515 and Glu517.

It belongs to the CTP synthase family. Homotetramer.

It catalyses the reaction UTP + L-glutamine + ATP + H2O = CTP + L-glutamate + ADP + phosphate + 2 H(+). The catalysed reaction is L-glutamine + H2O = L-glutamate + NH4(+). It carries out the reaction UTP + NH4(+) + ATP = CTP + ADP + phosphate + 2 H(+). The protein operates within pyrimidine metabolism; CTP biosynthesis via de novo pathway; CTP from UDP: step 2/2. Allosterically activated by GTP, when glutamine is the substrate; GTP has no effect on the reaction when ammonia is the substrate. The allosteric effector GTP functions by stabilizing the protein conformation that binds the tetrahedral intermediate(s) formed during glutamine hydrolysis. Inhibited by the product CTP, via allosteric rather than competitive inhibition. In terms of biological role, catalyzes the ATP-dependent amination of UTP to CTP with either L-glutamine or ammonia as the source of nitrogen. Regulates intracellular CTP levels through interactions with the four ribonucleotide triphosphates. This chain is CTP synthase, found in Salmonella typhi.